We begin with the raw amino-acid sequence, 181 residues long: Cytolethal distending toxin subunit C (181 aa).

The N-terminal stretch at 1-15 (MKKLAIVFTMLLIAG) is a signal peptide. A lipid anchor (N-palmitoyl cysteine) is attached at Cys16. Residue Cys16 is the site of S-diacylglycerol cysteine attachment. Residues 79-181 (QSGWIMIRTP…NPLNTESPII (103 aa)) enclose the Ricin B-type lectin domain.

As to quaternary structure, heterotrimer of 3 subunits, CdtA, CdtB and CdtC.

It localises to the cell outer membrane. In terms of biological role, part of the tripartite complex that is required for the CDT activity. CdtC, along with CdtA, probably forms a heterodimeric subunit required for the delivery of CdtB. In Escherichia coli, this protein is Cytolethal distending toxin subunit C (cdtC).